A 485-amino-acid polypeptide reads, in one-letter code: MSKFEKEQIAFPNDFRRNYISDQLHQKYDHKTNTELIHLNVKVSVAGRIMTRRIMGKSSFMTLRDGGGCIQLYFTIHDMKSQTMYFKVIKTWDIGDLIGVKGVLFKTRTGELSIHCKEMVLLTKSLRSLPDKFHGLRNIETKYRQRYLDLIVNEESMKTFKIRSLIISEIRRFMHQHHFIEVETPMMHHIPGGALARPFVTYHNKLNMNMYLRIAPELYLKKLIIGGFEKIFEINRNFRNESISPYHNPEFTMMEIYEAYVDYNNMIIFVQELFRTLTERILRKSVIEYGDYSLDFEKPFIKMSIKEAIMYYLPDIRTKNIDDILVVFDILKFFKVPSDNQWTLEKLHMVLFEEIVSKKIIQPTCITHYPIEVSPLARCSNDNAKIADRFELFIAGHEIGNGFSELNDPDDQRNRFLKQATEKMINNDIDQDESNMPYDKDYIVALEYGLPPTAGVGIGIDRLVMLLTNKHNIRDVILFPTLRSK.

Residues Glu391 and Glu398 each coordinate Mg(2+).

The protein belongs to the class-II aminoacyl-tRNA synthetase family. As to quaternary structure, homodimer. Mg(2+) serves as cofactor.

It is found in the cytoplasm. It catalyses the reaction tRNA(Lys) + L-lysine + ATP = L-lysyl-tRNA(Lys) + AMP + diphosphate. The protein is Lysine--tRNA ligase of Blochmanniella floridana.